A 318-amino-acid polypeptide reads, in one-letter code: Homeobox protein Nkx-2.5 (318 aa).

Positions 137–196 (RRKPRVLFSQAQVYELERRFKQQRYLSPAERDQLASVLKLTSTQVKIWFQNRRYKCKRQR) form a DNA-binding region, homeobox.

Belongs to the NK-2 homeobox family. As to quaternary structure, homodimer (via the homeobox); binds DNA as homodimer. Interacts (via the homeobox) with TBX5 (via the T-box); this complex binds DNA. Interacts with HIPK1 and HIPK2, but not HIPK3. Interacts with the C-terminal zinc finger of GATA4 through its homeobox domain. Also interacts with JARID2 which represses its ability to activate transcription of ANF. Interacts with FBLIM1. Interacts with TBX18. Interacts with histone methyltransferase NSD2 (via HMG box). Interacts with NEDD9. Interacts with TBX1.

The protein localises to the nucleus. In terms of biological role, transcription factor required for the development of the heart and the spleen. During heart development, acts as a transcriptional activator of NPPA/ANF in cooperation with GATA4. May cooperate with TBX2 to negatively modulate expression of NPPA/ANF in the atrioventricular canal. Binds to the core DNA motif of NPPA promoter. Together with PBX1, required for spleen development through a mechanism that involves CDKN2B repression. Positively regulates transcription of genes such as COL3A1 and MMP2, resulting in increased pulmonary endothelial fibrosis in response to hypoxia. In Rattus norvegicus (Rat), this protein is Homeobox protein Nkx-2.5 (Nkx2-5).